A 131-amino-acid polypeptide reads, in one-letter code: Large ribosomal subunit protein bL19 (131 aa).

It belongs to the bacterial ribosomal protein bL19 family.

In terms of biological role, this protein is located at the 30S-50S ribosomal subunit interface and may play a role in the structure and function of the aminoacyl-tRNA binding site. This Polynucleobacter necessarius subsp. necessarius (strain STIR1) protein is Large ribosomal subunit protein bL19.